The chain runs to 476 residues: Exodeoxyribonuclease 7 large subunit (476 aa).

This sequence belongs to the XseA family. Heterooligomer composed of large and small subunits.

The protein resides in the cytoplasm. It catalyses the reaction Exonucleolytic cleavage in either 5'- to 3'- or 3'- to 5'-direction to yield nucleoside 5'-phosphates.. Bidirectionally degrades single-stranded DNA into large acid-insoluble oligonucleotides, which are then degraded further into small acid-soluble oligonucleotides. The sequence is that of Exodeoxyribonuclease 7 large subunit from Bartonella bacilliformis (strain ATCC 35685 / KC583 / Herrer 020/F12,63).